Reading from the N-terminus, the 270-residue chain is Thiosulfate dehydrogenase (270 aa).

The first 27 residues, 1–27, serve as a signal peptide directing secretion; it reads MRGDVRVHTASPIAAAWLLAVGLVAHA. Cytochrome c domains are found at residues 44–158 and 174–260; these read PDGA…PVGA and PDGV…LTHP. C76, C79, H80, C187, C190, and H191 together coordinate heme c.

Monomer. Post-translationally, binds 2 heme c groups covalently per subunit.

Its subcellular location is the periplasm. The catalysed reaction is 2 thiosulfate + 2 Fe(III)-[cytochrome c] = tetrathionate + 2 Fe(II)-[cytochrome c] + 2 H(+). Functionally, catalyzes the oxidation of 2 molecules of thiosulfate to tetrathionate. The protein is Thiosulfate dehydrogenase (tsdA) of Allochromatium vinosum (strain ATCC 17899 / DSM 180 / NBRC 103801 / NCIMB 10441 / D) (Chromatium vinosum).